A 264-amino-acid chain; its full sequence is 3-methyl-2-oxobutanoate hydroxymethyltransferase (264 aa).

Mg(2+) contacts are provided by D45 and D84. 3-methyl-2-oxobutanoate is bound by residues 45 to 46 (DS), D84, and K112. E114 serves as a coordination point for Mg(2+). E181 serves as the catalytic Proton acceptor.

It belongs to the PanB family. As to quaternary structure, homodecamer; pentamer of dimers. It depends on Mg(2+) as a cofactor.

It localises to the cytoplasm. It carries out the reaction 3-methyl-2-oxobutanoate + (6R)-5,10-methylene-5,6,7,8-tetrahydrofolate + H2O = 2-dehydropantoate + (6S)-5,6,7,8-tetrahydrofolate. It functions in the pathway cofactor biosynthesis; (R)-pantothenate biosynthesis; (R)-pantoate from 3-methyl-2-oxobutanoate: step 1/2. In terms of biological role, catalyzes the reversible reaction in which hydroxymethyl group from 5,10-methylenetetrahydrofolate is transferred onto alpha-ketoisovalerate to form ketopantoate. This chain is 3-methyl-2-oxobutanoate hydroxymethyltransferase, found in Alteromonas mediterranea (strain DSM 17117 / CIP 110805 / LMG 28347 / Deep ecotype).